The following is a 58-amino-acid chain: Pepsin-1 (58 aa).

A propeptide spans 1 to 41 (activation peptide); sequence LLQVPLEKGQSAREYLQEQGLWEQYRLKYPYNPMAKFDPSF.

It belongs to the peptidase A1 family.

This is Pepsin-1 from Thunnus orientalis (North Pacific bluefin tuna).